We begin with the raw amino-acid sequence, 660 residues long: Methionine--tRNA ligase (660 aa).

The short motif at 15–25 (YYPSDKLHIGH) is the 'HIGH' region element. A 'KMSKS' region motif is present at residues 311–315 (KMSKS). ATP is bound at residue Lys314. A disordered region spans residues 535–554 (LMGGSKKPEEAPKDEKEESD). Positions 540–550 (KKPEEAPKDEK) are enriched in basic and acidic residues. Residues 560–660 (DFSKVELRIA…GALPNGSLVK (101 aa)) form the tRNA-binding domain.

The protein belongs to the class-I aminoacyl-tRNA synthetase family. MetG type 2B subfamily. In terms of assembly, homodimer.

The protein localises to the cytoplasm. It carries out the reaction tRNA(Met) + L-methionine + ATP = L-methionyl-tRNA(Met) + AMP + diphosphate. Functionally, is required not only for elongation of protein synthesis but also for the initiation of all mRNA translation through initiator tRNA(fMet) aminoacylation. In Halalkalibacterium halodurans (strain ATCC BAA-125 / DSM 18197 / FERM 7344 / JCM 9153 / C-125) (Bacillus halodurans), this protein is Methionine--tRNA ligase (metG).